Here is a 241-residue protein sequence, read N- to C-terminus: Pyridoxine 5'-phosphate synthase (241 aa).

Asparagine 10 lines the 3-amino-2-oxopropyl phosphate pocket. Residue 12–13 (DH) coordinates 1-deoxy-D-xylulose 5-phosphate. Arginine 21 contributes to the 3-amino-2-oxopropyl phosphate binding site. Residue histidine 48 is the Proton acceptor of the active site. 1-deoxy-D-xylulose 5-phosphate contacts are provided by arginine 50 and histidine 55. The active-site Proton acceptor is glutamate 75. Threonine 105 is a 1-deoxy-D-xylulose 5-phosphate binding site. Catalysis depends on histidine 195, which acts as the Proton donor. 3-amino-2-oxopropyl phosphate-binding positions include glycine 196 and 217–218 (GH).

The protein belongs to the PNP synthase family. In terms of assembly, homooctamer; tetramer of dimers.

Its subcellular location is the cytoplasm. The catalysed reaction is 3-amino-2-oxopropyl phosphate + 1-deoxy-D-xylulose 5-phosphate = pyridoxine 5'-phosphate + phosphate + 2 H2O + H(+). It participates in cofactor biosynthesis; pyridoxine 5'-phosphate biosynthesis; pyridoxine 5'-phosphate from D-erythrose 4-phosphate: step 5/5. Catalyzes the complicated ring closure reaction between the two acyclic compounds 1-deoxy-D-xylulose-5-phosphate (DXP) and 3-amino-2-oxopropyl phosphate (1-amino-acetone-3-phosphate or AAP) to form pyridoxine 5'-phosphate (PNP) and inorganic phosphate. This is Pyridoxine 5'-phosphate synthase from Bdellovibrio bacteriovorus (strain ATCC 15356 / DSM 50701 / NCIMB 9529 / HD100).